The sequence spans 389 residues: Arrestin-C (389 aa).

This sequence belongs to the arrestin family. Retina and pineal gland.

Functionally, may play a role in an as yet undefined retina-specific signal transduction. Could bind to photoactivated-phosphorylated red/green opsins. This chain is Arrestin-C (arr3), found in Aquarana catesbeiana (American bullfrog).